The sequence spans 85 residues: Inhibitor of dGTPase (85 aa).

As to quaternary structure, interacts with host dGTPase/dgt.

In terms of biological role, plays a role in increasing the intracellular pool of dGTP. Interacts with and inhibits host dGTPase/dgt. The complex made of the host dGTPase and gene 1.2 protein creates a GTP-binding site of high affinity. Subsequent binding of GTP to the enzyme-inhibitor complex inhibits its dissociation. This Escherichia coli (Bacteriophage T7) protein is Inhibitor of dGTPase.